We begin with the raw amino-acid sequence, 367 residues long: Phospho-N-acetylmuramoyl-pentapeptide-transferase (367 aa).

A run of 10 helical transmembrane segments spans residues I13–L33, L49–L69, M95–A115, L119–I139, L154–A174, W183–V203, I215–A235, T237–A257, A281–V301, and V347–F367.

It belongs to the glycosyltransferase 4 family. MraY subfamily. Mg(2+) serves as cofactor.

It is found in the cell inner membrane. The catalysed reaction is UDP-N-acetyl-alpha-D-muramoyl-L-alanyl-gamma-D-glutamyl-meso-2,6-diaminopimeloyl-D-alanyl-D-alanine + di-trans,octa-cis-undecaprenyl phosphate = di-trans,octa-cis-undecaprenyl diphospho-N-acetyl-alpha-D-muramoyl-L-alanyl-D-glutamyl-meso-2,6-diaminopimeloyl-D-alanyl-D-alanine + UMP. It participates in cell wall biogenesis; peptidoglycan biosynthesis. Functionally, catalyzes the initial step of the lipid cycle reactions in the biosynthesis of the cell wall peptidoglycan: transfers peptidoglycan precursor phospho-MurNAc-pentapeptide from UDP-MurNAc-pentapeptide onto the lipid carrier undecaprenyl phosphate, yielding undecaprenyl-pyrophosphoryl-MurNAc-pentapeptide, known as lipid I. This is Phospho-N-acetylmuramoyl-pentapeptide-transferase from Trichormus variabilis (strain ATCC 29413 / PCC 7937) (Anabaena variabilis).